The sequence spans 424 residues: 3-phosphoshikimate 1-carboxyvinyltransferase (424 aa).

Lys21, Ser22, and Arg26 together coordinate 3-phosphoshikimate. Residue Lys21 participates in phosphoenolpyruvate binding. Residues Gly91 and Arg119 each coordinate phosphoenolpyruvate. Positions 164, 166, 310, and 337 each coordinate 3-phosphoshikimate. Gln166 serves as a coordination point for phosphoenolpyruvate. Asp310 serves as the catalytic Proton acceptor. The phosphoenolpyruvate site is built by Arg341 and Arg382.

Belongs to the EPSP synthase family. Monomer.

The protein localises to the cytoplasm. The enzyme catalyses 3-phosphoshikimate + phosphoenolpyruvate = 5-O-(1-carboxyvinyl)-3-phosphoshikimate + phosphate. Its pathway is metabolic intermediate biosynthesis; chorismate biosynthesis; chorismate from D-erythrose 4-phosphate and phosphoenolpyruvate: step 6/7. Functionally, catalyzes the transfer of the enolpyruvyl moiety of phosphoenolpyruvate (PEP) to the 5-hydroxyl of shikimate-3-phosphate (S3P) to produce enolpyruvyl shikimate-3-phosphate and inorganic phosphate. The chain is 3-phosphoshikimate 1-carboxyvinyltransferase from Campylobacter curvus (strain 525.92).